Here is a 296-residue protein sequence, read N- to C-terminus: NAD kinase (296 aa).

The Proton acceptor role is filled by aspartate 72. NAD(+) is bound by residues aspartate 72–glycine 73, asparagine 146–aspartate 147, arginine 157, lysine 174, aspartate 176, threonine 187–serine 192, and glutamine 247.

The protein belongs to the NAD kinase family. A divalent metal cation serves as cofactor.

Its subcellular location is the cytoplasm. The enzyme catalyses NAD(+) + ATP = ADP + NADP(+) + H(+). Functionally, involved in the regulation of the intracellular balance of NAD and NADP, and is a key enzyme in the biosynthesis of NADP. Catalyzes specifically the phosphorylation on 2'-hydroxyl of the adenosine moiety of NAD to yield NADP. This is NAD kinase from Pseudomonas fluorescens (strain ATCC BAA-477 / NRRL B-23932 / Pf-5).